A 412-amino-acid polypeptide reads, in one-letter code: BSD domain-containing protein 1 (412 aa).

Positions 146 to 198 (WLAYWDPEHRKAEISELLVTSPSIRALYTKMVPAAVSHSEFWQRYFYKVHQLE) constitute a BSD domain. Basic and acidic residues-rich tracts occupy residues 208-219 (KQRADQSVHSEE) and 255-271 (HVED…RDHT). 2 disordered regions span residues 208–228 (KQRA…EEED) and 255–383 (HVED…EKDF). The span at 272 to 287 (SITSPSESSESISPIT) shows a compositional bias: low complexity. Basic and acidic residues predominate over residues 340–351 (THREDPPSDLRV). Polar residues predominate over residues 355–374 (NSDSGKSTPSNNGQKGSSTD).

This chain is BSD domain-containing protein 1 (bsdc1), found in Xenopus tropicalis (Western clawed frog).